The following is a 191-amino-acid chain: Glutathione-dependent formaldehyde-activating enzyme (191 aa).

The 148-residue stretch at 22–169 (FQGGTLECHC…LTELGLPPYD (148 aa)) folds into the CENP-V/GFA domain. Positions 29, 31, 50, 52, 55, 97, and 100 each coordinate Zn(2+).

The protein belongs to the Gfa family. It depends on Zn(2+) as a cofactor.

It carries out the reaction S-(hydroxymethyl)glutathione = glutathione + formaldehyde. The protein operates within one-carbon metabolism; formaldehyde degradation; formate from formaldehyde (glutathione route): step 1/3. Functionally, catalyzes the condensation of formaldehyde and glutathione to S-hydroxymethylglutathione. This chain is Glutathione-dependent formaldehyde-activating enzyme, found in Xanthomonas axonopodis pv. citri (strain 306).